A 270-amino-acid polypeptide reads, in one-letter code: Formamidopyrimidine-DNA glycosylase (270 aa).

Proline 2 (schiff-base intermediate with DNA) is an active-site residue. The active-site Proton donor is the glutamate 3. Catalysis depends on lysine 58, which acts as the Proton donor; for beta-elimination activity. Residues histidine 91, arginine 110, and arginine 151 each coordinate DNA. An FPG-type zinc finger spans residues 236–270 (RVYDREDAPCRRCATPIRRIVQAQRASFYCPTCQR). The active-site Proton donor; for delta-elimination activity is arginine 260.

The protein belongs to the FPG family. Monomer. Requires Zn(2+) as cofactor.

It carries out the reaction Hydrolysis of DNA containing ring-opened 7-methylguanine residues, releasing 2,6-diamino-4-hydroxy-5-(N-methyl)formamidopyrimidine.. It catalyses the reaction 2'-deoxyribonucleotide-(2'-deoxyribose 5'-phosphate)-2'-deoxyribonucleotide-DNA = a 3'-end 2'-deoxyribonucleotide-(2,3-dehydro-2,3-deoxyribose 5'-phosphate)-DNA + a 5'-end 5'-phospho-2'-deoxyribonucleoside-DNA + H(+). Involved in base excision repair of DNA damaged by oxidation or by mutagenic agents. Acts as a DNA glycosylase that recognizes and removes damaged bases. Has a preference for oxidized purines, such as 7,8-dihydro-8-oxoguanine (8-oxoG). Has AP (apurinic/apyrimidinic) lyase activity and introduces nicks in the DNA strand. Cleaves the DNA backbone by beta-delta elimination to generate a single-strand break at the site of the removed base with both 3'- and 5'-phosphates. The protein is Formamidopyrimidine-DNA glycosylase of Thiobacillus denitrificans (strain ATCC 25259 / T1).